Consider the following 141-residue polypeptide: Hemoglobin subunit alpha (141 aa).

Residues 1-141 enclose the Globin domain; the sequence is VLSDEDKTNV…VSTVLTSKYR (141 aa). Phosphoserine is present on serine 3. N6-succinyllysine is present on lysine 7. At threonine 8 the chain carries Phosphothreonine. At lysine 11 the chain carries N6-succinyllysine. Lysine 16 is subject to N6-acetyllysine; alternate. Lysine 16 carries the post-translational modification N6-succinyllysine; alternate. At tyrosine 24 the chain carries Phosphotyrosine. A Phosphoserine modification is found at serine 35. Lysine 40 is subject to N6-succinyllysine. A Phosphoserine modification is found at serine 49. Histidine 58 contacts O2. Histidine 87 serves as a coordination point for heme b. Serine 102 is subject to Phosphoserine. The residue at position 108 (threonine 108) is a Phosphothreonine. Phosphoserine is present on residues serine 124 and serine 131. Phosphothreonine is present on residues threonine 134 and threonine 137. At serine 138 the chain carries Phosphoserine.

It belongs to the globin family. Heterotetramer of two alpha chains and two beta chains. Red blood cells.

Its function is as follows. Involved in oxygen transport from the lung to the various peripheral tissues. In terms of biological role, hemopressin acts as an antagonist peptide of the cannabinoid receptor CNR1. Hemopressin-binding efficiently blocks cannabinoid receptor CNR1 and subsequent signaling. The protein is Hemoglobin subunit alpha (HBA) of Trichechus inunguis (Amazon manatee).